A 224-amino-acid chain; its full sequence is N-terminal Xaa-Pro-Lys N-methyltransferase 1-A (224 aa).

S-adenosyl-L-methionine is bound by residues Gly-70, Arg-75, 92–94 (DVT), 120–121 (LQ), and Gln-136.

The protein belongs to the methyltransferase superfamily. NTM1 family.

It localises to the nucleus. It catalyses the reaction N-terminal L-alanyl-L-prolyl-L-lysyl-[protein] + 3 S-adenosyl-L-methionine = N-terminal N,N,N-trimethyl-L-alanyl-L-prolyl-L-lysyl-[protein] + 3 S-adenosyl-L-homocysteine + 3 H(+). The enzyme catalyses N-terminal L-seryl-L-prolyl-L-lysyl-[protein] + 3 S-adenosyl-L-methionine = N-terminal N,N,N-trimethyl-L-seryl-L-prolyl-L-lysyl-[protein] + 3 S-adenosyl-L-homocysteine + 3 H(+). It carries out the reaction N-terminal L-prolyl-L-prolyl-L-lysyl-[protein] + 2 S-adenosyl-L-methionine = N-terminal N,N-dimethyl-L-prolyl-L-prolyl-L-lysyl-[protein] + 2 S-adenosyl-L-homocysteine + 2 H(+). In terms of biological role, distributive alpha-N-methyltransferase that methylates the N-terminus of target proteins containing the N-terminal motif [Ala/Gly/Pro/Ser]-Pro-Lys when the initiator Met is cleaved. Specifically catalyzes mono-, di- or tri-methylation of the exposed alpha-amino group of the Ala, Gly or Ser residue in the [Ala/Gly/Ser]-Pro-Lys motif and mono- or di-methylation of Pro in the Pro-Pro-Lys motif. Required during mitosis for normal bipolar spindle formation and chromosome segregation via its action on target proteins. This Xenopus laevis (African clawed frog) protein is N-terminal Xaa-Pro-Lys N-methyltransferase 1-A (ntmt1-a).